The chain runs to 858 residues: MHCQLGGQARALIFLMFESCRNSWHVSPWSSVPFLPSPCLFFSFSALPFLHPLSQLIACRGSSATWLFPVSSGTLVLRYALAASPPRGTMRPSTNPRTAEEGRPWLIHATQTGPQTASVLSLFPAVNAGFFSACRQHRGGRPPCLLNHRRLLLGLVSVLTVFLSCLPFTNATVSPAALQDVCYAFGNISRKLSSFLVPSRVTCPRGATPLSGVEAQDSLEHPEIPDFRFLVYDVKNGEGFHLQKEVIYRVALVISLLNARSAQQGRMTDVHTAEKAREDRGHPQASHMLCASSSFSHACSARSTFPFFPMWVLVLPPWCRLAHWHFSEETITAMAENSWLKHVRWGTFFDFQDLGERLPVMEYEDFLTYQLMRPDPWGERRQRKEKQTTPVELDVVLSVRFSSTPSSRSLPFCACLSSRASEIADEQAQRDDVCCNVNDLPGCPQIHAALTPQERQRAPAQRGGDPREEIDEQTGEFNEGHNPSGDGEREKRKPGRRSDTSRSRKEIQEEAKVSDTWSGVSLWLAGFCETVRALEMWCASLYIADAPRIADLLWRSVAERPPGAIQTVWLKFGENLLVPWPDVLLDAHLLDMLHVHPKLRQIGDLFINKFLSNRDKTETGKGERASTEGGTEGDENLAKHGYIAAHLRRTDFLYLKRSVPLQRAAAYLVSRMKEHGVFKAFICTDGSEDEKRELRDAVRRVGDAASSSPYTVVFFDLPTVRRLMIKTLEASSHVSDDGSFHDLKAVETPGYSGPNHISLLLHPGITALIEVWIAARAAYFIGTKDSRFSQAIRWERHLMGHPLDSSLEVFCVDSSPDQTGGQAQGKCFATKSHDPPEGRSRSELRRKYWPSLDPSSTL.

The Cytoplasmic segment spans residues 1–150; the sequence is MHCQLGGQAR…RPPCLLNHRR (150 aa). The chain crosses the membrane as a helical; Signal-anchor for type II membrane protein span at residues 151–171; it reads LLLGLVSVLTVFLSCLPFTNA. Residues 172–858 lie on the Lumenal side of the membrane; the sequence is TVSPAALQDV…WPSLDPSSTL (687 aa). 237–241 serves as a coordination point for GDP-beta-L-fucose; sequence GEGFH. E238 acts as the Proton acceptor in catalysis. The segment at 448 to 510 is disordered; that stretch reads AALTPQERQR…SRSRKEIQEE (63 aa). Residues 486 to 510 are compositionally biased toward basic and acidic residues; that stretch reads DGEREKRKPGRRSDTSRSRKEIQEE. GDP-beta-L-fucose is bound by residues 646-648 and 787-788; these read HLR and RF. Residues 819 to 858 are disordered; sequence TGGQAQGKCFATKSHDPPEGRSRSELRRKYWPSLDPSSTL. The segment covering 831 to 846 has biased composition (basic and acidic residues); that stretch reads KSHDPPEGRSRSELRR.

The protein belongs to the glycosyltransferase 68 family.

The protein resides in the endoplasmic reticulum membrane. It carries out the reaction L-seryl-[protein] + GDP-beta-L-fucose = 3-O-(alpha-L-fucosyl)-L-seryl-[protein] + GDP + H(+). The catalysed reaction is L-threonyl-[protein] + GDP-beta-L-fucose = 3-O-(alpha-L-fucosyl)-L-threonyl-[protein] + GDP + H(+). The protein operates within protein modification; protein glycosylation. Its function is as follows. Catalyzes the reaction that attaches fucose through an O-glycosidic linkage to a conserved serine or threonine residue in the consensus sequence C1-X-X-S/T-C2 of thrombospondin type I repeats (TSRs) where C1 and C2 are the first and second cysteines of the repeat, respectively. O-fucosylates microneme protein MIC2 and may play a role in its stabilization. Probably by regulating protein O-fucosylation, may play a role in tachyzoite adhesion to and/or invasion of host cells; however, POFUT2 involvement in adhesion/invasion is controversial. The sequence is that of GDP-fucose protein O-fucosyltransferase 2 from Toxoplasma gondii (strain ATCC 50853 / GT1).